The following is a 423-amino-acid chain: Transcription factor AP-2-epsilon (423 aa).

Residues 1-108 (MLVHSYSSME…EDAGLLSQPH (108 aa)) form a disordered region. Residues 14-27 (GLSSSSPGGRLSQL) show a composition bias toward low complexity. The PPxY motif motif lies at 50 to 55 (YFPPPY). Low complexity predominate over residues 57–70 (QSSLSYSQSQDGGY). A compositionally biased stretch (polar residues) spans 79–93 (SLNSLHQHQQAAWHS). Residues 276 to 405 (RRKAANVTLL…YLLEALKLLD (130 aa)) are H-S-H (helix-span-helix), dimerization.

The protein belongs to the AP-2 family. Binds DNA as a dimer. Can form homodimers or heterodimers with other AP-2 family members.

It is found in the nucleus. In terms of biological role, sequence-specific DNA-binding protein that interacts with inducible viral and cellular enhancer elements to regulate transcription of selected genes. AP-2 factors bind to the consensus sequence 5'-GCCNNNGGC-3' and activate genes involved in a large spectrum of important biological functions. This chain is Transcription factor AP-2-epsilon, found in Danio rerio (Zebrafish).